Consider the following 85-residue polypeptide: Depressant insect toxin BmK ITa1 (85 aa).

An N-terminal signal peptide occupies residues Met1 to Ala21. An LCN-type CS-alpha/beta domain is found at Asp22–Gly82. Cystine bridges form between Cys31/Cys81, Cys35/Cys56, Cys42/Cys63, and Cys46/Cys65. Gly82 carries the glycine amide modification.

The protein belongs to the long (4 C-C) scorpion toxin superfamily. Sodium channel inhibitor family. Beta subfamily. In terms of tissue distribution, expressed by the venom gland.

It is found in the secreted. Functionally, depressant insect toxins cause a transient contraction paralysis followed by a slow flaccid paralysis. They bind voltage-independently to sodium channels (Nav) and block action potentials, primarily by depolarizing the axonal membrane and suppressing the sodium current. This chain is Depressant insect toxin BmK ITa1, found in Olivierus martensii (Manchurian scorpion).